A 601-amino-acid polypeptide reads, in one-letter code: Elongation factor 4 (601 aa).

The region spanning 7–189 is the tr-type G domain; it reads SLIRNFSIIA…ALVTRLPPPV (183 aa). GTP contacts are provided by residues 19–24 and 136–139; these read DHGKST and NKVD.

It belongs to the TRAFAC class translation factor GTPase superfamily. Classic translation factor GTPase family. LepA subfamily.

Its subcellular location is the cell inner membrane. It catalyses the reaction GTP + H2O = GDP + phosphate + H(+). Required for accurate and efficient protein synthesis under certain stress conditions. May act as a fidelity factor of the translation reaction, by catalyzing a one-codon backward translocation of tRNAs on improperly translocated ribosomes. Back-translocation proceeds from a post-translocation (POST) complex to a pre-translocation (PRE) complex, thus giving elongation factor G a second chance to translocate the tRNAs correctly. Binds to ribosomes in a GTP-dependent manner. The protein is Elongation factor 4 of Gluconacetobacter diazotrophicus (strain ATCC 49037 / DSM 5601 / CCUG 37298 / CIP 103539 / LMG 7603 / PAl5).